We begin with the raw amino-acid sequence, 75 residues long: Large ribosomal subunit protein bL31 (75 aa).

This sequence belongs to the bacterial ribosomal protein bL31 family. Type A subfamily. Part of the 50S ribosomal subunit.

Binds the 23S rRNA. The sequence is that of Large ribosomal subunit protein bL31 from Chlorobium phaeovibrioides (strain DSM 265 / 1930) (Prosthecochloris vibrioformis (strain DSM 265)).